The following is a 130-amino-acid chain: MEAILNKNMKILIVDDFSTMRRIVKNLLRDLGFNNTQEADDGLTALPMLKKGDFDFVVTDWNMPGMQGIDLLKNIRADEELKHLPVLMITAEAKREQIIEAAQAGVNGYIVKPFTAATLKEKLDKIFERL.

A Response regulatory domain is found at 10–127; sequence KILIVDDFST…TLKEKLDKIF (118 aa). Residues aspartate 15, aspartate 16, aspartate 60, and asparagine 62 each contribute to the Mg(2+) site. The residue at position 60 (aspartate 60) is a 4-aspartylphosphate.

As to quaternary structure, interacts with FliM. The cofactor is Mg(2+).

It localises to the cytoplasm. Functionally, acts as a response regulator to control chemotaxis. Involved in the transmission of sensory signals from the chemoreceptors to the flagellar motors. Switches the flagellar rotation by binding to the flagellar motor switch protein FliM. In its active (phosphorylated or acetylated) form, exhibits enhanced binding to a switch component, FliM, at the flagellar motor which induces a change from counterclockwise to clockwise flagellar rotation. The chain is Chemotaxis protein CheY-3 from Vibrio cholerae serotype O1 (strain ATCC 39315 / El Tor Inaba N16961).